The following is a 491-amino-acid chain: Cytochrome P450 2F2 (491 aa).

Heme is bound at residue C436.

This sequence belongs to the cytochrome P450 family. Heme serves as cofactor. Club cells in lung and liver.

Its subcellular location is the endoplasmic reticulum membrane. It localises to the microsome membrane. In terms of biological role, involved in the regio- and stereoselective transformation of naphthalene to trans-1R-hydroxy-2R-glutathionyl-1,2-dihydronaphthalene in the presence of glutathione and glutathione S-transferases. It specifically catalyzes the production of a very reactive and potentially toxic intermediate, the 2R,2S arene oxide, that is associated with necrosis of the unciliated bronchiolar epithelial cells or club cells in lung. This is Cytochrome P450 2F2 (Cyp2f2) from Mus musculus (Mouse).